The primary structure comprises 340 residues: Ketol-acid reductoisomerase (NADP(+)) (340 aa).

The 181-residue stretch at 2-182 (AELYYDNQAD…GCTRAGVLRT (181 aa)) folds into the KARI N-terminal Rossmann domain. Residues 25-28 (FGSQ), Ser-51, Ser-53, and 83-86 (DIGQ) each bind NADP(+). His-108 is a catalytic residue. Residue Gly-134 coordinates NADP(+). In terms of domain architecture, KARI C-terminal knotted spans 183–328 (TFAEETETDL…RELRRMMPFV (146 aa)). Positions 191, 195, 227, and 231 each coordinate Mg(2+). Ser-252 lines the substrate pocket.

Belongs to the ketol-acid reductoisomerase family. The cofactor is Mg(2+).

The enzyme catalyses (2R)-2,3-dihydroxy-3-methylbutanoate + NADP(+) = (2S)-2-acetolactate + NADPH + H(+). It catalyses the reaction (2R,3R)-2,3-dihydroxy-3-methylpentanoate + NADP(+) = (S)-2-ethyl-2-hydroxy-3-oxobutanoate + NADPH + H(+). Its pathway is amino-acid biosynthesis; L-isoleucine biosynthesis; L-isoleucine from 2-oxobutanoate: step 2/4. It functions in the pathway amino-acid biosynthesis; L-valine biosynthesis; L-valine from pyruvate: step 2/4. In terms of biological role, involved in the biosynthesis of branched-chain amino acids (BCAA). Catalyzes an alkyl-migration followed by a ketol-acid reduction of (S)-2-acetolactate (S2AL) to yield (R)-2,3-dihydroxy-isovalerate. In the isomerase reaction, S2AL is rearranged via a Mg-dependent methyl migration to produce 3-hydroxy-3-methyl-2-ketobutyrate (HMKB). In the reductase reaction, this 2-ketoacid undergoes a metal-dependent reduction by NADPH to yield (R)-2,3-dihydroxy-isovalerate. The polypeptide is Ketol-acid reductoisomerase (NADP(+)) (Chloroflexus aurantiacus (strain ATCC 29366 / DSM 635 / J-10-fl)).